A 261-amino-acid polypeptide reads, in one-letter code: Small ribosomal subunit protein eS4 (261 aa).

Residues 42-100 (LPLILILRNRLKYALTYREVVSILMQRHILVDGKIHFCIRLSDVVSIPKTNENFRLLYD) enclose the S4 RNA-binding domain.

Belongs to the eukaryotic ribosomal protein eS4 family.

Its subcellular location is the cytoplasm. This chain is Small ribosomal subunit protein eS4 (RPS4), found in Prunus armeniaca (Apricot).